A 414-amino-acid chain; its full sequence is Enolase (414 aa).

Glutamine 156 is a (2R)-2-phosphoglycerate binding site. Glutamate 200 serves as the catalytic Proton donor. Residues aspartate 236, glutamate 281, and aspartate 308 each contribute to the Mg(2+) site. The (2R)-2-phosphoglycerate site is built by lysine 333, arginine 362, serine 363, and lysine 384. Lysine 333 (proton acceptor) is an active-site residue.

Belongs to the enolase family. The cofactor is Mg(2+).

The protein localises to the cytoplasm. The protein resides in the secreted. It is found in the cell surface. The catalysed reaction is (2R)-2-phosphoglycerate = phosphoenolpyruvate + H2O. The protein operates within carbohydrate degradation; glycolysis; pyruvate from D-glyceraldehyde 3-phosphate: step 4/5. Functionally, catalyzes the reversible conversion of 2-phosphoglycerate (2-PG) into phosphoenolpyruvate (PEP). It is essential for the degradation of carbohydrates via glycolysis. In Methanosphaera stadtmanae (strain ATCC 43021 / DSM 3091 / JCM 11832 / MCB-3), this protein is Enolase.